Reading from the N-terminus, the 235-residue chain is Protein RESISTANCE TO PHYTOPHTHORA 1, chloroplastic (235 aa).

A chloroplast-targeting transit peptide spans 1 to 43 (MNSATTMSASVLNYQILKFFPPQKNGFLKSPLIRGKICRFCVS). Residues 53–66 (VIEDPKEETQEKSD) show a composition bias toward basic and acidic residues. Residues 53–92 (VIEDPKEETQEKSDGVIVNSTEEEEERSGENSTSTGPSTV) are disordered. 4 consecutive transmembrane segments (helical) span residues 131–151 (FEVQAYASMLIGGALSFNLIF), 158–178 (IWRLMGMWSIWMFTIPSLRAR), 188–208 (LNYLFLLVPLLNVAIPFFLKS), and 211–231 (VVWSADTVAFLGMYAWKLGWL).

The protein localises to the plastid. It is found in the chloroplast. It localises to the membrane. In terms of biological role, plays a positive role in the immune response to the oomycetes P.infestans, including induced oxidative burst and enhanced expression of defense-related genes. In Solanum tuberosum (Potato), this protein is Protein RESISTANCE TO PHYTOPHTHORA 1, chloroplastic.